The following is a 330-amino-acid chain: Methylthioribose-1-phosphate isomerase (330 aa).

Substrate is bound by residues 49–51 (RGA), Arg-83, and Gln-179. The Proton donor role is filled by Asp-220. 230-231 (NK) lines the substrate pocket.

The protein belongs to the eIF-2B alpha/beta/delta subunits family. MtnA subfamily.

It catalyses the reaction 5-(methylsulfanyl)-alpha-D-ribose 1-phosphate = 5-(methylsulfanyl)-D-ribulose 1-phosphate. It participates in amino-acid biosynthesis; L-methionine biosynthesis via salvage pathway; L-methionine from S-methyl-5-thio-alpha-D-ribose 1-phosphate: step 1/6. In terms of biological role, catalyzes the interconversion of methylthioribose-1-phosphate (MTR-1-P) into methylthioribulose-1-phosphate (MTRu-1-P). The sequence is that of Methylthioribose-1-phosphate isomerase from Thermus thermophilus (strain ATCC 27634 / DSM 579 / HB8).